The following is a 651-amino-acid chain: ATP-dependent RNA helicase DBP6 (651 aa).

The disordered stretch occupies residues 1–114; that stretch reads MFAARFDPTK…ADVDDDGKHT (114 aa). The segment covering 7 to 17 has biased composition (basic and acidic residues); the sequence is DPTKVVREEPK. A compositionally biased stretch (acidic residues) spans 27–42; that stretch reads DDVESSDSDQDIEDGV. Polar residues predominate over residues 49–60; that stretch reads KEQSGTDVTTTR. The span at 69–85 shows a compositional bias: acidic residues; that stretch reads DSESESESESDSDDEMN. The span at 100 to 113 shows a compositional bias: basic and acidic residues; that stretch reads VSSKDADVDDDGKH. The short motif at 216-224 is the Q motif element; it reads TFPIQTAML. The region spanning 240-420 is the Helicase ATP-binding domain; that stretch reads KNFTRRIGDI…DLQLYNPTLF (181 aa). 253-260 lines the ATP pocket; the sequence is ASTGSGKT. Positions 360 to 363 match the DEAD box motif; sequence DEAD. Residues 452 to 611 enclose the Helicase C-terminal domain; it reads YLLKLLEQLS…CKPISYNDSY (160 aa).

It belongs to the DEAD box helicase family. DDX51/DBP6 subfamily. Associated with pre-ribosomal particles.

Its subcellular location is the nucleus. The protein resides in the nucleolus. It catalyses the reaction ATP + H2O = ADP + phosphate + H(+). ATP-binding RNA helicase involved in the biogenesis of 60S ribosomal subunits and is required for the normal formation of 25S and 5.8S rRNAs. This chain is ATP-dependent RNA helicase DBP6 (DBP6), found in Candida glabrata (strain ATCC 2001 / BCRC 20586 / JCM 3761 / NBRC 0622 / NRRL Y-65 / CBS 138) (Yeast).